Reading from the N-terminus, the 93-residue chain is Cobalt transport protein CbiN (93 aa).

2 consecutive transmembrane segments (helical) span residues 5 to 25 and 63 to 83; these read LMLLVMVVALVILPFFINHGG and LLFTLQGSLGAAVIFYILGYC.

The protein belongs to the CbiN family. As to quaternary structure, forms an energy-coupling factor (ECF) transporter complex composed of an ATP-binding protein (A component, CbiO), a transmembrane protein (T component, CbiQ) and 2 possible substrate-capture proteins (S components, CbiM and CbiN) of unknown stoichimetry.

It localises to the cell inner membrane. It functions in the pathway cofactor biosynthesis; adenosylcobalamin biosynthesis. In terms of biological role, part of the energy-coupling factor (ECF) transporter complex CbiMNOQ involved in cobalt import. In Salmonella paratyphi B (strain ATCC BAA-1250 / SPB7), this protein is Cobalt transport protein CbiN.